The sequence spans 504 residues: Cytoplasmic dynein 1 light intermediate chain 1 (504 aa).

35-42 is an ATP binding site; sequence GDPTSGKS. Low complexity-rich tracts occupy residues 167–189, 392–425, and 437–446; these read TTTA…TNKT, NSPS…NTPL, and SSNNPVAASP. Disordered stretches follow at residues 167–195, 383–446, and 464–504; these read TTTA…TTDK, LDND…AASP, and DKTS…QQKK. Residues 464–473 are compositionally biased toward basic and acidic residues; that stretch reads DKTSSRKDLK. The span at 475 to 487 shows a compositional bias: polar residues; the sequence is SLASPPTTSVSSN. Basic and acidic residues predominate over residues 488–504; the sequence is AREDAKKELDKLKQQKK.

It belongs to the dynein light intermediate chain family. In terms of assembly, homodimer. The cytoplasmic dynein 1 complex consists of two catalytic heavy chains (HCs) and a number of non-catalytic subunits presented by intermediate chains (ICs), light intermediate chains (LICs) and light chains (LCs).

It localises to the cytoplasm. Its subcellular location is the cytoskeleton. Its function is as follows. Acts as one of several non-catalytic accessory components of the cytoplasmic dynein 1 complex that are thought to be involved in linking dynein to cargos and to adapter proteins that regulate dynein function. Cytoplasmic dynein 1 acts as a motor for the intracellular retrograde motility of vesicles and organelles along microtubules. May play a role in binding dynein to membranous organelles or chromosomes. The protein is Cytoplasmic dynein 1 light intermediate chain 1 (dync1li1) of Dictyostelium discoideum (Social amoeba).